The chain runs to 389 residues: Alpha-2B adrenergic receptor (389 aa).

Residues 1–25 (AIAAVITFLILFTIFGNALVILAVL) form a helical membrane-spanning segment. Residues 26-36 (TSRSLRAPQNL) are Cytoplasmic-facing. Residues 37 to 62 (FLVSLAAADILVATLIIPFSLANELL) traverse the membrane as a helical segment. Topologically, residues 63–72 (GYWYFRRTWC) are extracellular. Residues Cys-72 and Cys-151 are joined by a disulfide bond. The helical transmembrane segment at 73–95 (EVYLALDVLFCTSSIVHLCAISL) threads the bilayer. Residues 96–117 (DRYWAVTRALEYNTKRTPRRIK) are Cytoplasmic-facing. Residues 118–140 (CIILTVWLIAAVISLPPLIYKGD) form a helical membrane-spanning segment. Topologically, residues 141–156 (QGPQPRGRPQCKLNQE) are extracellular. The chain crosses the membrane as a helical span at residues 157-180 (AWYILASSIGSFFAPCLIMILVYL). Topologically, residues 181–363 (RIYLIAKRSH…LTREKRFTFV (183 aa)) are cytoplasmic. Disordered regions lie at residues 194-216 (PRAKGGPGGGGSKQPHPVPAGAS) and 233-320 (EANG…PLQQ). A compositionally biased stretch (gly residues) spans 196-205 (AKGGPGGGGS). Residues 255 to 267 (PALPSSWPALPSS) are compositionally biased toward low complexity. Positions 280 to 302 (LEEEAEEEEEEEEEEEEGEEECE) are enriched in acidic residues. The span at 303–320 (PQALPASPASACSPPLQQ) shows a compositional bias: low complexity. A helical transmembrane segment spans residues 364-387 (LAVVIGVFVLCWFPFFFSYSLGAI). Residues 388 to 389 (CP) lie on the Extracellular side of the membrane.

It belongs to the G-protein coupled receptor 1 family. Adrenergic receptor subfamily. ADRA2B sub-subfamily. As to quaternary structure, interacts with RAB26. Interacts with PPP1R9B. Interacts with GGA1, GGA2 and GGA3.

Its subcellular location is the cell membrane. Functionally, alpha-2 adrenergic receptors mediate the catecholamine-induced inhibition of adenylate cyclase through the action of G proteins. The polypeptide is Alpha-2B adrenergic receptor (ADRA2B) (Equus caballus (Horse)).